The primary structure comprises 169 residues: Lipoprotein signal peptidase (169 aa).

4 helical membrane passes run 15–35, 47–67, 75–95, and 107–127; these read WLWL…VVMN, ILPF…SFLS, WLFT…MSKL, and AMII…GFVV. Catalysis depends on residues aspartate 128 and aspartate 146. Residues 141–161 traverse the membrane as a helical segment; it reads AFNLADMAICLGAAMIILDGF.

Belongs to the peptidase A8 family.

The protein localises to the cell inner membrane. It catalyses the reaction Release of signal peptides from bacterial membrane prolipoproteins. Hydrolyzes -Xaa-Yaa-Zaa-|-(S,diacylglyceryl)Cys-, in which Xaa is hydrophobic (preferably Leu), and Yaa (Ala or Ser) and Zaa (Gly or Ala) have small, neutral side chains.. It participates in protein modification; lipoprotein biosynthesis (signal peptide cleavage). This protein specifically catalyzes the removal of signal peptides from prolipoproteins. The polypeptide is Lipoprotein signal peptidase (Vibrio parahaemolyticus serotype O3:K6 (strain RIMD 2210633)).